The primary structure comprises 398 residues: Type II secretion system protein L (398 aa).

Topologically, residues 1-248 (MNNHHTSSAA…RQPTPRRWRP (248 aa)) are cytoplasmic. The helical transmembrane segment at 249–265 (VIVAALALLLLWSSNCL) threads the bilayer. Residues 266-398 (HDHLMLGQQA…GRLTLEGNDA (133 aa)) are Periplasmic-facing.

The protein belongs to the GSP L family. In terms of assembly, type II secretion system is composed of four main components: the outer membrane complex, the inner membrane complex, the cytoplasmic secretion ATPase and the periplasm-spanning pseudopilus. Forms homodimers. Interacts with PulM/GspM. Interacts with PulE/GspE and PulF/GspF.

Its subcellular location is the cell inner membrane. Inner membrane component of the type II secretion system required for the energy-dependent secretion of extracellular factors such as proteases and toxins from the periplasm. Plays a role in the complex assembly and recruits PulM resulting in a stable complex in the inner membrane. Provides thus a link between the energy-providing PulE protein in the cytoplasm and the rest of the T2SS machinery. The protein is Type II secretion system protein L (pulL) of Klebsiella pneumoniae.